Here is a 92-residue protein sequence, read N- to C-terminus: Turripeptide UID-02 (92 aa).

An N-terminal signal peptide occupies residues methionine 1–alanine 21. Positions threonine 22 to asparagine 39 are excised as a propeptide.

As to expression, expressed by the venom duct.

The protein localises to the secreted. In Gemmula speciosa (Splendid gem-turris), this protein is Turripeptide UID-02.